Reading from the N-terminus, the 255-residue chain is Proteasome subunit alpha (255 aa).

The tract at residues 224-255 (RLEELLGERGPAQHAPEEPADPEPEPPIAPPG) is disordered.

The protein belongs to the peptidase T1A family. In terms of assembly, the 20S proteasome core is composed of 14 alpha and 14 beta subunits that assemble into four stacked heptameric rings, resulting in a barrel-shaped structure. The two inner rings, each composed of seven catalytic beta subunits, are sandwiched by two outer rings, each composed of seven alpha subunits. The catalytic chamber with the active sites is on the inside of the barrel. Has a gated structure, the ends of the cylinder being occluded by the N-termini of the alpha-subunits. Is capped by the proteasome-associated ATPase, ARC.

It is found in the cytoplasm. The protein operates within protein degradation; proteasomal Pup-dependent pathway. With respect to regulation, the formation of the proteasomal ATPase ARC-20S proteasome complex, likely via the docking of the C-termini of ARC into the intersubunit pockets in the alpha-rings, may trigger opening of the gate for substrate entry. Interconversion between the open-gate and close-gate conformations leads to a dynamic regulation of the 20S proteasome proteolysis activity. Functionally, component of the proteasome core, a large protease complex with broad specificity involved in protein degradation. The sequence is that of Proteasome subunit alpha from Nocardioides sp. (strain ATCC BAA-499 / JS614).